Reading from the N-terminus, the 514-residue chain is tRNA-2-methylthio-N(6)-dimethylallyladenosine synthase (514 aa).

One can recognise an MTTase N-terminal domain in the interval Arg-68–Leu-186. [4Fe-4S] cluster contacts are provided by Cys-77, Cys-113, Cys-147, Cys-223, Cys-227, and Cys-230. Residues Arg-209–Lys-439 enclose the Radical SAM core domain. A TRAM domain is found at Asn-442 to Glu-505.

It belongs to the methylthiotransferase family. MiaB subfamily. Monomer. [4Fe-4S] cluster serves as cofactor.

Its subcellular location is the cytoplasm. The catalysed reaction is N(6)-dimethylallyladenosine(37) in tRNA + (sulfur carrier)-SH + AH2 + 2 S-adenosyl-L-methionine = 2-methylsulfanyl-N(6)-dimethylallyladenosine(37) in tRNA + (sulfur carrier)-H + 5'-deoxyadenosine + L-methionine + A + S-adenosyl-L-homocysteine + 2 H(+). Functionally, catalyzes the methylthiolation of N6-(dimethylallyl)adenosine (i(6)A), leading to the formation of 2-methylthio-N6-(dimethylallyl)adenosine (ms(2)i(6)A) at position 37 in tRNAs that read codons beginning with uridine. The protein is tRNA-2-methylthio-N(6)-dimethylallyladenosine synthase of Staphylococcus haemolyticus (strain JCSC1435).